The sequence spans 274 residues: Large ribosomal subunit protein uL2c (274 aa).

2 disordered regions span residues 1–22 (MAIHLYKTSTPSTRNGAVDNQV) and 225–274 (PVDH…RRSK).

This sequence belongs to the universal ribosomal protein uL2 family. In terms of assembly, part of the 50S ribosomal subunit.

The protein resides in the plastid. It localises to the chloroplast. This is Large ribosomal subunit protein uL2c (rpl2) from Silene latifolia (White campion).